We begin with the raw amino-acid sequence, 570 residues long: Urease subunit alpha (570 aa).

The Urease domain maps to 131 to 570; the sequence is GGVDTHIHFI…LPMAQRYFLF (440 aa). Positions 136, 138, and 219 each coordinate Ni(2+). At lysine 219 the chain carries N6-carboxylysine. Substrate is bound at residue histidine 221. Residues histidine 248 and histidine 274 each contribute to the Ni(2+) site. Histidine 322 serves as the catalytic Proton donor. Aspartate 362 is a binding site for Ni(2+).

It belongs to the metallo-dependent hydrolases superfamily. Urease alpha subunit family. In terms of assembly, heterotrimer of UreA (gamma), UreB (beta) and UreC (alpha) subunits. Three heterotrimers associate to form the active enzyme. Ni cation is required as a cofactor. In terms of processing, carboxylation allows a single lysine to coordinate two nickel ions.

The protein localises to the cytoplasm. The enzyme catalyses urea + 2 H2O + H(+) = hydrogencarbonate + 2 NH4(+). It functions in the pathway nitrogen metabolism; urea degradation; CO(2) and NH(3) from urea (urease route): step 1/1. This Methylocella silvestris (strain DSM 15510 / CIP 108128 / LMG 27833 / NCIMB 13906 / BL2) protein is Urease subunit alpha.